A 209-amino-acid polypeptide reads, in one-letter code: Rac-like GTP-binding protein ARAC9 (209 aa).

25 to 32 (GDGAVGKT) contributes to the GTP binding site. An Effector region motif is present at residues 47 to 55 (YVPTVFDNF). GTP-binding positions include 72 to 76 (DTAGQ) and 130 to 133 (TKSD). Residue Cys-206 is modified to Cysteine methyl ester. A lipid anchor (S-geranylgeranyl cysteine) is attached at Cys-206. Residues 207–209 (HVL) constitute a propeptide, removed in mature form.

Belongs to the small GTPase superfamily. Rho family. As to quaternary structure, interacts with SPK1.

It localises to the cytoplasm. It is found in the membrane. In terms of biological role, inactive GDP-bound Rho GTPases reside in the cytosol, are found in a complex with Rho GDP-dissociation inhibitors (Rho GDIs), and are released from the GDI protein in order to translocate to membranes upon activation. In Arabidopsis thaliana (Mouse-ear cress), this protein is Rac-like GTP-binding protein ARAC9 (ARAC9).